Here is a 353-residue protein sequence, read N- to C-terminus: MSHILDKIETVYPFPPKPIPLSQEEKADYIERIKKLLKEKDAVLIAHYYTDPEIQALAEETGGFVGDSLEMAKFGNRHPASTLIIGGVRFMGESAKILTPEKRILMPTLEAECSLDLGCPADKFSEFCDAHPDHTVVVYANTSAAVKARADWVVTSSIALDIVEHLDAEDKPIIWGPDRHLGSYIAKKTGADMLLWHAECVVHDEFSADALRKMKNVYPDAAILVHPESPASVVELADAVGSTSQLIKAAKELPQQQMIVATDKGIFFKMQQLVPEKELIEAPTAGAGATCRSCAHCPWMAMNGLKAIEKALSEGGAEHEIFVDEALRVKSLIPLNRMLDFAEQLNMQVKGNA.

Iminosuccinate-binding residues include histidine 47 and serine 68. A [4Fe-4S] cluster-binding site is contributed by cysteine 113. Residues 139 to 141 (YAN) and serine 156 contribute to the iminosuccinate site. Cysteine 200 is a binding site for [4Fe-4S] cluster. Residues 226-228 (HPE) and threonine 243 each bind iminosuccinate. Cysteine 297 is a binding site for [4Fe-4S] cluster.

This sequence belongs to the quinolinate synthase family. Type 1 subfamily. Requires [4Fe-4S] cluster as cofactor.

It is found in the cytoplasm. It carries out the reaction iminosuccinate + dihydroxyacetone phosphate = quinolinate + phosphate + 2 H2O + H(+). Its pathway is cofactor biosynthesis; NAD(+) biosynthesis; quinolinate from iminoaspartate: step 1/1. Catalyzes the condensation of iminoaspartate with dihydroxyacetone phosphate to form quinolinate. In Vibrio campbellii (strain ATCC BAA-1116), this protein is Quinolinate synthase.